A 346-amino-acid chain; its full sequence is tRNA N6-adenosine threonylcarbamoyltransferase (346 aa).

A divalent metal cation is bound by residues His120, His124, and Tyr141. Substrate contacts are provided by residues 141–145, Asp173, Gly188, Glu192, and Asn277; that span reads YVSGG. An a divalent metal cation-binding site is contributed by Asp305.

This sequence belongs to the KAE1 / TsaD family. In terms of assembly, component of the EKC/KEOPS complex composed of at least BUD32, CGI121, GON7, KAE1 and PCC1; the whole complex dimerizes. A divalent metal cation is required as a cofactor.

Its subcellular location is the cytoplasm. It is found in the nucleus. It carries out the reaction L-threonylcarbamoyladenylate + adenosine(37) in tRNA = N(6)-L-threonylcarbamoyladenosine(37) in tRNA + AMP + H(+). Functionally, component of the EKC/KEOPS complex that is required for the formation of a threonylcarbamoyl group on adenosine at position 37 (t(6)A37) in tRNAs that read codons beginning with adenine. The complex is probably involved in the transfer of the threonylcarbamoyl moiety of threonylcarbamoyl-AMP (TC-AMP) to the N6 group of A37. KAE1 likely plays a direct catalytic role in this reaction, but requires other protein(s) of the complex to fulfill this activity. The EKC/KEOPS complex also promotes both telomere uncapping and telomere elongation. The complex is required for efficient recruitment of transcriptional coactivators. This Gibberella zeae (strain ATCC MYA-4620 / CBS 123657 / FGSC 9075 / NRRL 31084 / PH-1) (Wheat head blight fungus) protein is tRNA N6-adenosine threonylcarbamoyltransferase.